Reading from the N-terminus, the 404-residue chain is Argininosuccinate synthase (404 aa).

Residue Ala-9–Ser-17 participates in ATP binding. Tyr-86 serves as a coordination point for L-citrulline. Gly-116 provides a ligand contact to ATP. Residues Thr-118, Asn-122, and Asp-123 each coordinate L-aspartate. Position 122 (Asn-122) interacts with L-citrulline. L-citrulline-binding residues include Arg-126, Ser-174, Ser-183, Glu-259, and Tyr-271.

Belongs to the argininosuccinate synthase family. Type 1 subfamily. In terms of assembly, homotetramer.

The protein resides in the cytoplasm. The enzyme catalyses L-citrulline + L-aspartate + ATP = 2-(N(omega)-L-arginino)succinate + AMP + diphosphate + H(+). It functions in the pathway amino-acid biosynthesis; L-arginine biosynthesis; L-arginine from L-ornithine and carbamoyl phosphate: step 2/3. This chain is Argininosuccinate synthase, found in Listeria monocytogenes serovar 1/2a (strain ATCC BAA-679 / EGD-e).